We begin with the raw amino-acid sequence, 363 residues long: Cytoplasmic envelopment protein 2 (363 aa).

This sequence belongs to the herpesviridae cytoplasmic envelopment protein 2 family. Interacts with cytoplasmic envelopment protein 3 and with the capsid.

Its subcellular location is the virion tegument. The protein resides in the host cytoplasm. It is found in the host nucleus. Plays a critical role in cytoplasmic virus egress. Participates in the final step of tegumentation and envelope acquisition within the host cytoplasm by directly interacting with the capsid. Upon virion binding to target cell, a signaling cascade is triggered to disrupt the interaction with the capsid, thereby preparing capsid uncoating. In Varicella-zoster virus (strain Dumas) (HHV-3), this protein is Cytoplasmic envelopment protein 2 (44).